A 726-amino-acid chain; its full sequence is Beta-adducin (726 aa).

The segment at 1 to 25 is disordered; it reads MSEETVPEAASPPPPQGQPYFDRFS. A phosphoserine mark is found at S11 and S25. T55 bears the Phosphothreonine; by PKA mark. A phosphoserine mark is found at S60 and S344. The tract at residues 425 to 444 is interaction with calmodulin; the sequence is KQQKEKTRWLNTPNTYLRVN. Residues 525-726 are disordered; the sequence is AEKSRSPSTE…KSKKKEKVES (202 aa). Phosphoserine is present on residues S530 and S532. At T533 the chain carries Phosphothreonine. S535 bears the Phosphoserine mark. Residues 566 to 586 are compositionally biased toward basic and acidic residues; that stretch reads EEYKKEVERKKLELDGEKETA. A compositionally biased stretch (low complexity) spans 588–606; the sequence is EEPGSPAKSAPASPVQSPA. 4 positions are modified to phosphoserine: S592, S596, S600, and S604. T611 is modified (phosphothreonine). 4 positions are modified to phosphoserine: S613, S617, S619, and S621. Basic and acidic residues predominate over residues 621–631; sequence SLEEGTKKTET. Residues 632–645 are compositionally biased toward low complexity; sequence SKAATTEPETTQPE. Over residues 665-674 the composition is skewed to polar residues; sequence GLSQMTTSAD. Residue T675 is modified to Phosphothreonine. A phosphoserine mark is found at S686, S689, S693, S697, S699, and S701. A compositionally biased stretch (low complexity) spans 689-701; the sequence is SGPMSPEGSPSKS. Residues 702–726 show a composition bias toward basic residues; it reads PSKKKKKFRTPSFLKKSKKKEKVES. Position 703 is a phosphoserine; by PKC (S703). The tract at residues 704-721 is interaction with calmodulin; the sequence is KKKKKFRTPSFLKKSKKK. At S713 the chain carries Phosphoserine; by PKA and PKC.

It belongs to the aldolase class II family. Adducin subfamily. As to quaternary structure, heterodimer of an alpha and a beta subunit. Found in a complex with ADD2, DMTN and SLC2A1. Interacts with SLC2A1. Post-translationally, the N-terminus is blocked. As to expression, expressed mainly in brain, spleen, kidney cortex and medulla, and heart. Also expressed in human umbilical vein endothelial cells, human vascular smooth muscle cells, kidney tubular cells and K-562 cell line.

Its subcellular location is the cytoplasm. It is found in the cytoskeleton. The protein resides in the cell membrane. Membrane-cytoskeleton-associated protein that promotes the assembly of the spectrin-actin network. Binds to the erythrocyte membrane receptor SLC2A1/GLUT1 and may therefore provide a link between the spectrin cytoskeleton to the plasma membrane. Binds to calmodulin. Calmodulin binds preferentially to the beta subunit. This Homo sapiens (Human) protein is Beta-adducin (ADD2).